The following is a 723-amino-acid chain: Threonine--tRNA ligase 1, cytoplasmic (723 aa).

The disordered stretch occupies residues methionine 1–glutamate 46. Over residues glycine 14–serine 39 the composition is skewed to basic and acidic residues. A Phosphoserine modification is found at serine 39. The region spanning aspartate 79–lysine 143 is the TGS domain. Lysine 243 is subject to N6-acetyllysine. A Phosphothreonine modification is found at threonine 246. At tyrosine 298 the chain carries Phosphotyrosine. A Phosphothreonine modification is found at threonine 453. Serine 702 bears the Phosphoserine mark.

The protein belongs to the class-II aminoacyl-tRNA synthetase family. Homodimer. ISGylated.

Its subcellular location is the cytoplasm. It carries out the reaction tRNA(Thr) + L-threonine + ATP = L-threonyl-tRNA(Thr) + AMP + diphosphate + H(+). With respect to regulation, inhibited by borrelidin (BN, IC 50 is 7 nM), which binds to 4 distinct subsites in the protein, preventing binding of all 3 substrates. Catalyzes the attachment of threonine to tRNA(Thr) in a two-step reaction: threonine is first activated by ATP to form Thr-AMP and then transferred to the acceptor end of tRNA(Thr). Also edits incorrectly charged tRNA(Thr) via its editing domain, at the post-transfer stage. The chain is Threonine--tRNA ligase 1, cytoplasmic from Homo sapiens (Human).